A 184-amino-acid polypeptide reads, in one-letter code: ATP synthase subunit b, chloroplastic (184 aa).

The helical transmembrane segment at 26-48 (ILATNLINLSVVLGVLIFFGKGV) threads the bilayer.

This sequence belongs to the ATPase B chain family. F-type ATPases have 2 components, F(1) - the catalytic core - and F(0) - the membrane proton channel. F(1) has five subunits: alpha(3), beta(3), gamma(1), delta(1), epsilon(1). F(0) has four main subunits: a(1), b(1), b'(1) and c(10-14). The alpha and beta chains form an alternating ring which encloses part of the gamma chain. F(1) is attached to F(0) by a central stalk formed by the gamma and epsilon chains, while a peripheral stalk is formed by the delta, b and b' chains.

The protein localises to the plastid. The protein resides in the chloroplast thylakoid membrane. In terms of biological role, f(1)F(0) ATP synthase produces ATP from ADP in the presence of a proton or sodium gradient. F-type ATPases consist of two structural domains, F(1) containing the extramembraneous catalytic core and F(0) containing the membrane proton channel, linked together by a central stalk and a peripheral stalk. During catalysis, ATP synthesis in the catalytic domain of F(1) is coupled via a rotary mechanism of the central stalk subunits to proton translocation. Functionally, component of the F(0) channel, it forms part of the peripheral stalk, linking F(1) to F(0). The sequence is that of ATP synthase subunit b, chloroplastic from Calycanthus floridus var. glaucus (Eastern sweetshrub).